The sequence spans 305 residues: Oxidoreductase OpS7 (305 aa).

This sequence belongs to the oxidoreductase OpS7 family.

The protein operates within secondary metabolite biosynthesis. In terms of biological role, oxidoreductase; part of the gene cluster that mediates the biosynthesis of the bibenzoquinone oosporein, a metabolite required for fungal virulence that acts by evading host immunity to facilitate fungal multiplication in insects. The non-reducing polyketide synthase OpS1 produces orsellinic acid by condensing acetyl-CoA with 3 malonyl-CoA units. Orsellinic acid is then hydroxylated to benzenetriol by the hydroxylase OpS4. The intermediate is oxidized either nonenzymatically to 5,5'-dideoxy-oosporein or enzymatically to benzenetetrol by the oxidoreductase OpS7. The latter is further dimerized to oosporein by the catalase OpS5. OpS6 probably functions en route for protecting cells against oxidative stress by scavenging any leaked free radical form of benzenetetrol by activating the thiol group of glutathione. The polypeptide is Oxidoreductase OpS7 (Beauveria bassiana (strain ARSEF 2860) (White muscardine disease fungus)).